Here is a 1297-residue protein sequence, read N- to C-terminus: Phosphoribosylformylglycinamidine synthase (1297 aa).

The tract at residues Thr-301 to Pro-329 is disordered. Residue Gly-308–Asp-319 coordinates ATP. Mg(2+) is bound by residues Asp-680, Glu-719, Asn-723, and Asp-887. Residue Ser-889 coordinates ATP. The 253-residue stretch at Ile-1045–Phe-1297 folds into the Glutamine amidotransferase type-1 domain. The active-site Nucleophile is the Cys-1138. Active-site residues include His-1263 and Glu-1265.

The protein in the N-terminal section; belongs to the FGAMS family. Monomer.

The protein localises to the cytoplasm. It catalyses the reaction N(2)-formyl-N(1)-(5-phospho-beta-D-ribosyl)glycinamide + L-glutamine + ATP + H2O = 2-formamido-N(1)-(5-O-phospho-beta-D-ribosyl)acetamidine + L-glutamate + ADP + phosphate + H(+). Its pathway is purine metabolism; IMP biosynthesis via de novo pathway; 5-amino-1-(5-phospho-D-ribosyl)imidazole from N(2)-formyl-N(1)-(5-phospho-D-ribosyl)glycinamide: step 1/2. Phosphoribosylformylglycinamidine synthase involved in the purines biosynthetic pathway. Catalyzes the ATP-dependent conversion of formylglycinamide ribonucleotide (FGAR) and glutamine to yield formylglycinamidine ribonucleotide (FGAM) and glutamate. The sequence is that of Phosphoribosylformylglycinamidine synthase from Haemophilus influenzae (strain ATCC 51907 / DSM 11121 / KW20 / Rd).